Consider the following 673-residue polypeptide: Protein VirD3 (673 aa).

Disordered regions lie at residues 36–73 (VAGE…GRLG), 171–216 (SPVN…GTSV), 229–409 (ERDT…LRSS), 478–497 (RLNG…LEDF), 520–552 (EKGK…VTPL), and 585–673 (DSSR…GCGR). Polar residues-rich tracts occupy residues 171-183 (SPVN…SNWQ), 193-216 (VQPS…GTSV), 234-246 (SETT…TISS), and 268-277 (QSLSVTVTTP). Residues 278-287 (NSNAEASSHS) show a composition bias toward low complexity. The segment covering 288–303 (AHTETLDDVSSDRSSE) has biased composition (basic and acidic residues). 2 stretches are compositionally biased toward basic and acidic residues: residues 520-534 (EKGK…DTRF) and 638-673 (AAEH…GCGR).

The chain is Protein VirD3 (virD3) from Agrobacterium fabrum (strain C58 / ATCC 33970) (Agrobacterium tumefaciens (strain C58)).